The primary structure comprises 806 residues: Leucine--tRNA ligase (806 aa).

The short motif at 54-64 is the 'HIGH' region element; the sequence is SYPSGDLHMGH. Residues 571 to 575 carry the 'KMSKS' region motif; sequence KMSKS. Residue lysine 574 coordinates ATP.

It belongs to the class-I aminoacyl-tRNA synthetase family.

It is found in the cytoplasm. The catalysed reaction is tRNA(Leu) + L-leucine + ATP = L-leucyl-tRNA(Leu) + AMP + diphosphate. The chain is Leucine--tRNA ligase from Tropheryma whipplei (strain Twist) (Whipple's bacillus).